A 358-amino-acid polypeptide reads, in one-letter code: ATPase ASNA1 homolog (358 aa).

35 to 42 provides a ligand contact to ATP; it reads KGGVGKTT. The active site involves D64. Residues E235 and N262 each contribute to the ATP site.

This sequence belongs to the arsA ATPase family. As to quaternary structure, homodimer.

It is found in the cytoplasm. Its subcellular location is the endoplasmic reticulum. In terms of biological role, ATPase required for the post-translational delivery of tail-anchored (TA) proteins to the endoplasmic reticulum. Recognizes and selectively binds the transmembrane domain of TA proteins in the cytosol. This complex then targets to the endoplasmic reticulum by membrane-bound receptors, where the tail-anchored protein is released for insertion. This process is regulated by ATP binding and hydrolysis. ATP binding drives the homodimer towards the closed dimer state, facilitating recognition of newly synthesized TA membrane proteins. ATP hydrolysis is required for insertion. Subsequently, the homodimer reverts towards the open dimer state, lowering its affinity for the membrane-bound receptor, and returning it to the cytosol to initiate a new round of targeting. This Babesia bovis protein is ATPase ASNA1 homolog.